The primary structure comprises 446 residues: F-box/LRR-repeat protein At4g29420 (446 aa).

The F-box domain occupies 1-51 (MDELPPELWIKILSRINDSESLARCRVASKTLNSLSREVRAVNLICTWSRY). LRR repeat units lie at residues 59 to 84 (VVTP…SVGV), 103 to 130 (DLYL…SISD), 135 to 160 (SCWR…EVKN), 181 to 206 (FIRL…NLIG), 223 to 248 (CHWT…KLKC), 265 to 289 (HLSV…ELVS), 318 to 343 (QSER…SLSP), and 382 to 407 (NVHQ…RLMI).

The chain is F-box/LRR-repeat protein At4g29420 from Arabidopsis thaliana (Mouse-ear cress).